A 564-amino-acid chain; its full sequence is E3 ubiquitin-protein ligase hrd-like protein 1 (564 aa).

Residues 17-37 traverse the membrane as a helical segment; sequence SYLALSVLVAIVASVTVFTTF. A glycan (N-linked (GlcNAc...) asparagine) is linked at Asn53. The next 7 membrane-spanning stretches (helical) occupy residues 61 to 81, 86 to 106, 123 to 143, 148 to 168, 185 to 205, 215 to 235, and 272 to 292; these read YGLN…HYIL, LIWV…RLII, QAFF…IGPQ, VMPW…QFIT, KISF…FLIS, PAVL…YILF, and LSFA…IFFL. The RING-type; atypical zinc finger occupies 335–373; that stretch reads CVVCWELLGTSRRLPCSHQFHDWCLMWWLAQDSSCPTCR. The region spanning 432-474 is the CUE domain; the sequence is QLQTMLEQVREMFPQMSVDIIMTDLRQSGSAQSTIENILEGRI.

Its subcellular location is the membrane. In terms of biological role, proposed to have a role in neuroprotection. The protein is E3 ubiquitin-protein ligase hrd-like protein 1 (hrdl-1) of Caenorhabditis elegans.